The primary structure comprises 618 residues: C2H2 finger domain transcription factor sebA (618 aa).

The interval 394–488 (GDATQSTEEM…RGRKQSLTDD (95 aa)) is disordered. The span at 406 to 416 (KKRVTSRRSLK) shows a compositional bias: basic residues. Composition is skewed to low complexity over residues 417–432 (KAST…AKKT) and 443–458 (SDTT…SSRQ). Over residues 459–469 (NSTANTSNSES) the composition is skewed to polar residues. 2 consecutive C2H2-type zinc fingers follow at residues 493 to 516 (FVCS…RSLH) and 522 to 544 (FECH…ARTH). Residues 582–597 (NAATSKSTTSESSDGT) show a composition bias toward low complexity. The interval 582–618 (NAATSKSTTSESSDGTISDTSSVGGRPAKKRRRDDHV) is disordered. The segment covering 608-618 (PAKKRRRDDHV) has biased composition (basic residues).

It localises to the nucleus. The protein resides in the cytoplasm. In terms of biological role, transcription factor that is involved in the response to heat shock, oxidative stress, and poor nutrient conditions. Controls expression of oxidative stress response genes such as ccp1, cat1, cat2, sod2; as well as of heat shock genes such as hsf1, hsp30 and hsp90. Negatively controls the expression of the fumiquinazoline (fmq) cluster via binding to the STRE motifs at the fmqA-D promoters. Plays a role in virulence. The chain is C2H2 finger domain transcription factor sebA from Aspergillus fumigatus (strain ATCC MYA-4609 / CBS 101355 / FGSC A1100 / Af293) (Neosartorya fumigata).